We begin with the raw amino-acid sequence, 234 residues long: STARD3 N-terminal-like protein (234 aa).

The residue at position 1 (methionine 1) is an N-acetylmethionine. Over 1 to 53 (MNHLPEDMENALTGSQSSHASLRNIHSINPTQLMARIESYEGREKKGISDVRR) the chain is Cytoplasmic. Phosphoserine is present on residues serine 15, serine 21, and serine 27. The MENTAL domain occupies 48 to 218 (ISDVRRTFCL…YSPPESEAGS (171 aa)). The helical transmembrane segment at 54–74 (TFCLFVTFDLLFVTLLWIIEL) threads the bilayer. Over 75–97 (NVNGGIENTLEKEVMQYDYYSSY) the chain is Extracellular. The chain crosses the membrane as a helical span at residues 98–118 (FDIFLLAVFRFKVLILAYAVC). Topologically, residues 119–122 (RLRH) are cytoplasmic. Residues 123–143 (WWAIALTTAVTSAFLLAKVIL) traverse the membrane as a helical segment. Residues 144–150 (SKLFSQG) lie on the Extracellular side of the membrane. A helical membrane pass occupies residues 151 to 171 (AFGYVLPIISFILAWIETWFL). Over 172-234 (DFKVLPQEAE…QDSEKPLLEL (63 aa)) the chain is Cytoplasmic. A Phosphoserine modification is found at serine 193. The segment at 200–234 (PGGLSDGQFYSPPESEAGSEEAEEKQDSEKPLLEL) is disordered. Positions 208 to 213 (FYSPPE) match the FFAT motif. A compositionally biased stretch (basic and acidic residues) spans 224 to 234 (KQDSEKPLLEL).

This sequence belongs to the STARD3 family. Homodimer. Interacts (via the MENTAL domain) with STARD3NL. Interacts (via FFAT motif) with VAPA. Interacts (via FFAT motif) with VAPB. Interacts (via FFAT motif) with MOSPD2 (via MSP domain).

It is found in the late endosome membrane. Its function is as follows. Tethering protein that creates contact site between the endoplasmic reticulum and late endosomes: localizes to late endosome membranes and contacts the endoplasmic reticulum via interaction with VAPA and VAPB. The polypeptide is STARD3 N-terminal-like protein (Homo sapiens (Human)).